A 424-amino-acid polypeptide reads, in one-letter code: GTPase Obg (424 aa).

One can recognise an Obg domain in the interval 1 to 159; the sequence is MVFIDTARIY…MWVRLELKLL (159 aa). The OBG-type G domain occupies 160 to 330; the sequence is ADVGLVGFPN…LLDKTIEILS (171 aa). GTP is bound by residues 166-173, 191-195, 212-215, 282-285, and 311-313; these read GFPNAGKS, FTTLT, DIPG, NKMD, and SAL. Mg(2+) contacts are provided by serine 173 and threonine 193. Residues 347–424 form the OCT domain; it reads NPPEEEETLE…VRDFEFEYYE (78 aa).

This sequence belongs to the TRAFAC class OBG-HflX-like GTPase superfamily. OBG GTPase family. As to quaternary structure, monomer. Mg(2+) is required as a cofactor.

It localises to the cytoplasm. Functionally, an essential GTPase which binds GTP, GDP and possibly (p)ppGpp with moderate affinity, with high nucleotide exchange rates and a fairly low GTP hydrolysis rate. Plays a role in control of the cell cycle, stress response, ribosome biogenesis and in those bacteria that undergo differentiation, in morphogenesis control. The protein is GTPase Obg of Caldanaerobacter subterraneus subsp. tengcongensis (strain DSM 15242 / JCM 11007 / NBRC 100824 / MB4) (Thermoanaerobacter tengcongensis).